The sequence spans 92 residues: Acylphosphatase (92 aa).

Residues 7 to 92 (KTRCTISGRV…DPAPAEFSVG (86 aa)) enclose the Acylphosphatase-like domain. Residues Arg22 and Asn40 contribute to the active site.

It belongs to the acylphosphatase family.

It carries out the reaction an acyl phosphate + H2O = a carboxylate + phosphate + H(+). The protein is Acylphosphatase (acyP) of Halorhodospira halophila (strain DSM 244 / SL1) (Ectothiorhodospira halophila (strain DSM 244 / SL1)).